The primary structure comprises 377 residues: Guanine nucleotide-binding protein subunit beta-1 (377 aa).

7 WD repeats span residues G63–N93, L105–N135, G154–D185, G202–D233, G246–D276, G293–D323, and S339–A369.

Belongs to the WD repeat G protein beta family. As to quaternary structure, g proteins are composed of 3 units, alpha, beta and gamma.

In terms of biological role, guanine nucleotide-binding proteins (G proteins) are involved as a modulator or transducer in various transmembrane signaling systems. The beta and gamma chains are required for the GTPase activity, for replacement of GDP by GTP, and for G protein-effector interaction. The chain is Guanine nucleotide-binding protein subunit beta-1 from Nicotiana tabacum (Common tobacco).